Consider the following 290-residue polypeptide: GTPase Era (290 aa).

The region spanning 2 to 169 (KSGFAAILGR…KNKIYENFSE (168 aa)) is the Era-type G domain. Residues 10–17 (GRPSTGKS) are G1. 10–17 (GRPSTGKS) lines the GTP pocket. The tract at residues 36 to 40 (QTTRN) is G2. A G3 region spans residues 57-60 (DTPG). GTP-binding positions include 57–61 (DTPGF) and 119–122 (NKID). The segment at 119 to 122 (NKID) is G4. The G5 stretch occupies residues 148–150 (ISA). In terms of domain architecture, KH type-2 spans 200–276 (LKEELPYSLY…NLFLQVKLKK (77 aa)).

It belongs to the TRAFAC class TrmE-Era-EngA-EngB-Septin-like GTPase superfamily. Era GTPase family. Monomer.

Its subcellular location is the cytoplasm. The protein resides in the cell inner membrane. In terms of biological role, an essential GTPase that binds both GDP and GTP, with rapid nucleotide exchange. Plays a role in 16S rRNA processing and 30S ribosomal subunit biogenesis and possibly also in cell cycle regulation and energy metabolism. The protein is GTPase Era of Borreliella burgdorferi (strain ATCC 35210 / DSM 4680 / CIP 102532 / B31) (Borrelia burgdorferi).